Here is a 258-residue protein sequence, read N- to C-terminus: Dihydroorotate dehydrogenase B (NAD(+)), electron transfer subunit (258 aa).

An FAD-binding FR-type domain is found at 1–101; the sequence is MKKAYLTVVS…LGPLGNGYDP (101 aa). Residues 52 to 55, 69 to 71, and 76 to 77 contribute to the FAD site; these read RPIS, IYR, and GT. [2Fe-2S] cluster is bound by residues Cys-220, Cys-225, Cys-228, and Cys-243.

Belongs to the PyrK family. As to quaternary structure, heterotetramer of 2 PyrK and 2 PyrD type B subunits. It depends on [2Fe-2S] cluster as a cofactor. FAD is required as a cofactor.

Its pathway is pyrimidine metabolism; UMP biosynthesis via de novo pathway; orotate from (S)-dihydroorotate (NAD(+) route): step 1/1. Functionally, responsible for channeling the electrons from the oxidation of dihydroorotate from the FMN redox center in the PyrD type B subunit to the ultimate electron acceptor NAD(+). The chain is Dihydroorotate dehydrogenase B (NAD(+)), electron transfer subunit from Bacillus pumilus (strain SAFR-032).